The following is a 407-amino-acid chain: Lymphocyte transmembrane adapter 1 (407 aa).

Residues 1-25 (MYSTPAPPEVTRRNSEPSTRQGTLG) form a disordered region. The Extracellular portion of the chain corresponds to 1–33 (MYSTPAPPEVTRRNSEPSTRQGTLGSLQGEKGQ). Over residues 16–25 (EPSTRQGTLG) the composition is skewed to polar residues. The helical; Signal-anchor for type III membrane protein transmembrane segment at 34–54 (IIFPGFVVLLTIILVIIAACI) threads the bilayer. At 55–407 (LWSWKKQKKR…LATETSDEDA (353 aa)) the chain is on the cytoplasmic side. Residues 109-131 (ESLLSRASDSPEPEAPQANGSLQ) are disordered. 4 positions are modified to phosphotyrosine: Y185, Y260, Y286, and Y353. Positions 331 to 388 (SAQSEDSAMVHREEQSSEDSSDYETVLVAELEGRDWKQGPGTQHPSDEGTPGDLAGKL) are disordered.

In terms of assembly, when phosphorylated, interacts with GRB2, PIK3R1 and GRAP2. Phosphorylated on tyrosines upon TCR or BCR activation; which leads to the recruitment of GRB2, PIK3R1 and GRAP2. Expressed in T-cells and B-cells.

The protein localises to the cell membrane. Negatively regulates TCR (T-cell antigen receptor)-mediated signaling in T-cells and BCR (B-cell antigen receptor)-mediated signaling in B-cells. The protein is Lymphocyte transmembrane adapter 1 (Lax1) of Mus musculus (Mouse).